The following is a 119-amino-acid chain: Large ribosomal subunit protein bL20 (119 aa).

This sequence belongs to the bacterial ribosomal protein bL20 family.

Its function is as follows. Binds directly to 23S ribosomal RNA and is necessary for the in vitro assembly process of the 50S ribosomal subunit. It is not involved in the protein synthesizing functions of that subunit. The chain is Large ribosomal subunit protein bL20 from Granulibacter bethesdensis (strain ATCC BAA-1260 / CGDNIH1).